The chain runs to 255 residues: Imidazole glycerol phosphate synthase subunit HisF (255 aa).

Residues D12 and D131 contribute to the active site.

This sequence belongs to the HisA/HisF family. Heterodimer of HisH and HisF.

Its subcellular location is the cytoplasm. The catalysed reaction is 5-[(5-phospho-1-deoxy-D-ribulos-1-ylimino)methylamino]-1-(5-phospho-beta-D-ribosyl)imidazole-4-carboxamide + L-glutamine = D-erythro-1-(imidazol-4-yl)glycerol 3-phosphate + 5-amino-1-(5-phospho-beta-D-ribosyl)imidazole-4-carboxamide + L-glutamate + H(+). Its pathway is amino-acid biosynthesis; L-histidine biosynthesis; L-histidine from 5-phospho-alpha-D-ribose 1-diphosphate: step 5/9. In terms of biological role, IGPS catalyzes the conversion of PRFAR and glutamine to IGP, AICAR and glutamate. The HisF subunit catalyzes the cyclization activity that produces IGP and AICAR from PRFAR using the ammonia provided by the HisH subunit. In Salinispora tropica (strain ATCC BAA-916 / DSM 44818 / JCM 13857 / NBRC 105044 / CNB-440), this protein is Imidazole glycerol phosphate synthase subunit HisF.